The sequence spans 606 residues: Endo-beta-1,4-xylanase Xyn10C (606 aa).

Residues 1-19 (MKKIQQLLMLSLISSTLIA) form the signal peptide. Cysteine 20 carries N-palmitoyl cysteine lipidation. Cysteine 20 carries S-diacylglycerol cysteine lipidation. A disordered region spans residues 23-64 (GGGGGSTPTTSSSPQSSSPASTPSSASSSSIISSSSLSSSLS). A compositionally biased stretch (low complexity) spans 29–64 (TPTTSSSPQSSSPASTPSSASSSSIISSSSLSSSLS). Residues 91–242 (GNVVIEVDMA…KSVTITLAQE (152 aa)) enclose the CBM15 domain. Asparagine 106 and glutamine 171 together coordinate a carbohydrate. A disulfide bond links cysteine 183 and cysteine 200. A carbohydrate is bound at residue glutamine 217. Residues 245–596 (SANVDHLRDL…KPALRGFADA (352 aa)) form the GH10 domain. Residues 296–299 (NIMK), histidine 332, and asparagine 384 contribute to the substrate site. Catalysis depends on glutamate 385, which acts as the Proton donor. The active-site Nucleophile is glutamate 497. Tryptophan 552 serves as a coordination point for substrate.

It belongs to the glycosyl hydrolase 10 (cellulase F) family.

It is found in the cell outer membrane. It carries out the reaction Endohydrolysis of (1-&gt;4)-beta-D-xylosidic linkages in xylans.. It functions in the pathway glycan degradation; xylan degradation. Functionally, endo-acting xylanase which specifically cleaves internal linkages on the xylan backbone, releasing xylooligosaccharides. Is able to hydrolyze oat spelt xylan, the arabinoxylans from wheat and rye, and glucuronoxylan. Also displays very low activity against xylooligosaccharides. During the xylan degradation process, Xyn10C may act on the soluble xylans and long xylooligosaccharides products released by the secreted xylanases Xyn11A, Xyn11B and Xyn10A. In Cellvibrio japonicus (Pseudomonas fluorescens subsp. cellulosa), this protein is Endo-beta-1,4-xylanase Xyn10C (xyn10C).